We begin with the raw amino-acid sequence, 456 residues long: Ribosomal protein uS12 methylthiotransferase RimO (456 aa).

The MTTase N-terminal domain maps to Pro-11–Pro-126. [4Fe-4S] cluster is bound by residues Cys-20, Cys-56, Cys-85, Cys-157, Cys-161, and Cys-164. The 242-residue stretch at Leu-143–Arg-384 folds into the Radical SAM core domain. Residues Gln-387–Ala-456 form the TRAM domain.

The protein belongs to the methylthiotransferase family. RimO subfamily. It depends on [4Fe-4S] cluster as a cofactor.

Its subcellular location is the cytoplasm. It carries out the reaction L-aspartate(89)-[ribosomal protein uS12]-hydrogen + (sulfur carrier)-SH + AH2 + 2 S-adenosyl-L-methionine = 3-methylsulfanyl-L-aspartate(89)-[ribosomal protein uS12]-hydrogen + (sulfur carrier)-H + 5'-deoxyadenosine + L-methionine + A + S-adenosyl-L-homocysteine + 2 H(+). In terms of biological role, catalyzes the methylthiolation of an aspartic acid residue of ribosomal protein uS12. This chain is Ribosomal protein uS12 methylthiotransferase RimO, found in Cupriavidus metallidurans (strain ATCC 43123 / DSM 2839 / NBRC 102507 / CH34) (Ralstonia metallidurans).